The sequence spans 559 residues: Peptidyl-prolyl isomerase cwc27 (559 aa).

One can recognise a PPIase cyclophilin-type domain in the interval 11-184 (PTASATLHTT…YPVKVVSCEV (174 aa)). Disordered stretches follow at residues 201 to 395 (ATAP…GFSS), 413 to 449 (ESAD…EDEE), and 518 to 559 (PRER…REKP). The span at 261–273 (APKKTSPEAEQQT) shows a compositional bias: basic and acidic residues. Positions 305–319 (LPDPESPARSPPQSP) are enriched in pro residues. Polar residues-rich tracts occupy residues 384–394 (GSSTNGVTGFS) and 425–442 (TSIS…AKSN).

This sequence belongs to the cyclophilin-type PPIase family. CWC27 subfamily. Associated with the spliceosome.

The protein localises to the cytoplasm. Its subcellular location is the nucleus. It carries out the reaction [protein]-peptidylproline (omega=180) = [protein]-peptidylproline (omega=0). PPIases accelerate the folding of proteins. It catalyzes the cis-trans isomerization of proline imidic peptide bonds in oligopeptides. Involved in pre-mRNA splicing. In Aspergillus fumigatus (strain ATCC MYA-4609 / CBS 101355 / FGSC A1100 / Af293) (Neosartorya fumigata), this protein is Peptidyl-prolyl isomerase cwc27 (cwc27).